The sequence spans 165 residues: UPF0303 protein BamMC406_1480 (165 aa).

The protein belongs to the UPF0303 family.

In Burkholderia ambifaria (strain MC40-6), this protein is UPF0303 protein BamMC406_1480.